A 325-amino-acid chain; its full sequence is NAD kinase (325 aa).

Asp91 functions as the Proton acceptor in the catalytic mechanism. NAD(+) contacts are provided by residues 91–92 (DG), His96, 165–166 (ND), His176, His193, Asp195, and 206–211 (TAYALS).

The protein belongs to the NAD kinase family. A divalent metal cation is required as a cofactor.

It is found in the cytoplasm. The enzyme catalyses NAD(+) + ATP = ADP + NADP(+) + H(+). Its function is as follows. Involved in the regulation of the intracellular balance of NAD and NADP, and is a key enzyme in the biosynthesis of NADP. Catalyzes specifically the phosphorylation on 2'-hydroxyl of the adenosine moiety of NAD to yield NADP. The polypeptide is NAD kinase (Psychrobacter arcticus (strain DSM 17307 / VKM B-2377 / 273-4)).